The following is a 252-amino-acid chain: 3-dehydroquinate dehydratase (252 aa).

3-dehydroquinate is bound by residues serine 21, 46-48 (EWR), and arginine 82. The active-site Proton donor/acceptor is the histidine 143. Lysine 170 (schiff-base intermediate with substrate) is an active-site residue. 3 residues coordinate 3-dehydroquinate: arginine 213, serine 232, and glutamine 236.

This sequence belongs to the type-I 3-dehydroquinase family. As to quaternary structure, dimer of dimers.

The catalysed reaction is 3-dehydroquinate = 3-dehydroshikimate + H2O. It functions in the pathway metabolic intermediate biosynthesis; chorismate biosynthesis; chorismate from D-erythrose 4-phosphate and phosphoenolpyruvate: step 3/7. Inhibited by (2R)-2-methyl-3-dehydroquinic acid. Its function is as follows. Involved in the third step of the chorismate pathway, which leads to the biosynthesis of aromatic amino acids. Catalyzes the cis-dehydration of 3-dehydroquinate (DHQ) and introduces the first double bond of the aromatic ring to yield 3-dehydroshikimate. The reaction involves the formation of an imine intermediate between the keto group of 3-dehydroquinate and the epsilon-amino group of Lys-170 at the active site. In Salmonella typhi, this protein is 3-dehydroquinate dehydratase.